A 131-amino-acid chain; its full sequence is Aspartate 1-decarboxylase (131 aa).

Catalysis depends on serine 25, which acts as the Schiff-base intermediate with substrate; via pyruvic acid. Serine 25 bears the Pyruvic acid (Ser) mark. A substrate-binding site is contributed by threonine 57. The active-site Proton donor is the tyrosine 58. Glycine 73 to alanine 75 provides a ligand contact to substrate.

It belongs to the PanD family. Heterooctamer of four alpha and four beta subunits. Pyruvate is required as a cofactor. In terms of processing, is synthesized initially as an inactive proenzyme, which is activated by self-cleavage at a specific serine bond to produce a beta-subunit with a hydroxyl group at its C-terminus and an alpha-subunit with a pyruvoyl group at its N-terminus.

The protein localises to the cytoplasm. It catalyses the reaction L-aspartate + H(+) = beta-alanine + CO2. Its pathway is cofactor biosynthesis; (R)-pantothenate biosynthesis; beta-alanine from L-aspartate: step 1/1. Functionally, catalyzes the pyruvoyl-dependent decarboxylation of aspartate to produce beta-alanine. The polypeptide is Aspartate 1-decarboxylase (Acaryochloris marina (strain MBIC 11017)).